We begin with the raw amino-acid sequence, 269 residues long: Phosphate import ATP-binding protein PstB 2 (269 aa).

The 243-residue stretch at 22–264 (LSTNDLRVFY…PSLQSTEDYV (243 aa)) folds into the ABC transporter domain. 55-62 (GPSGSGKS) contributes to the ATP binding site.

This sequence belongs to the ABC transporter superfamily. Phosphate importer (TC 3.A.1.7) family. The complex is composed of two ATP-binding proteins (PstB), two transmembrane proteins (PstC and PstA) and a solute-binding protein (PstS).

The protein localises to the cell membrane. The catalysed reaction is phosphate(out) + ATP + H2O = ADP + 2 phosphate(in) + H(+). Functionally, part of the ABC transporter complex PstSACB involved in phosphate import. Responsible for energy coupling to the transport system. This Lactococcus lactis subsp. lactis (strain IL1403) (Streptococcus lactis) protein is Phosphate import ATP-binding protein PstB 2.